A 181-amino-acid polypeptide reads, in one-letter code: tRNA-splicing endonuclease (181 aa).

Catalysis depends on residues Tyr-118, His-126, and Lys-157.

It belongs to the tRNA-intron endonuclease family. Archaeal short subfamily. Homotetramer; although the tetramer contains four active sites, only two participate in the cleavage. Therefore, it should be considered as a dimer of dimers.

The enzyme catalyses pretRNA = a 3'-half-tRNA molecule with a 5'-OH end + a 5'-half-tRNA molecule with a 2',3'-cyclic phosphate end + an intron with a 2',3'-cyclic phosphate and a 5'-hydroxyl terminus.. Its function is as follows. Endonuclease that removes tRNA introns. Cleaves pre-tRNA at the 5'- and 3'-splice sites to release the intron. The products are an intron and two tRNA half-molecules bearing 2',3' cyclic phosphate and 5'-OH termini. Recognizes a pseudosymmetric substrate in which 2 bulged loops of 3 bases are separated by a stem of 4 bp. This is tRNA-splicing endonuclease from Hyperthermus butylicus (strain DSM 5456 / JCM 9403 / PLM1-5).